The following is a 102-amino-acid chain: Co-chaperonin GroES (102 aa).

It belongs to the GroES chaperonin family. Heptamer of 7 subunits arranged in a ring. Interacts with the chaperonin GroEL.

It is found in the cytoplasm. In terms of biological role, together with the chaperonin GroEL, plays an essential role in assisting protein folding. The GroEL-GroES system forms a nano-cage that allows encapsulation of the non-native substrate proteins and provides a physical environment optimized to promote and accelerate protein folding. GroES binds to the apical surface of the GroEL ring, thereby capping the opening of the GroEL channel. This chain is Co-chaperonin GroES, found in Streptomyces albus G.